Here is a 178-residue protein sequence, read N- to C-terminus: NADH-quinone oxidoreductase subunit B 1 (178 aa).

[4Fe-4S] cluster-binding residues include C39, C40, C104, and C135.

The protein belongs to the complex I 20 kDa subunit family. NDH-1 is composed of 14 different subunits. Subunits NuoB, C, D, E, F, and G constitute the peripheral sector of the complex. Requires [4Fe-4S] cluster as cofactor.

The protein localises to the cell inner membrane. It catalyses the reaction a quinone + NADH + 5 H(+)(in) = a quinol + NAD(+) + 4 H(+)(out). In terms of biological role, NDH-1 shuttles electrons from NADH, via FMN and iron-sulfur (Fe-S) centers, to quinones in the respiratory chain. The immediate electron acceptor for the enzyme in this species is believed to be a menaquinone. Couples the redox reaction to proton translocation (for every two electrons transferred, four hydrogen ions are translocated across the cytoplasmic membrane), and thus conserves the redox energy in a proton gradient. This is NADH-quinone oxidoreductase subunit B 1 from Cytophaga hutchinsonii (strain ATCC 33406 / DSM 1761 / CIP 103989 / NBRC 15051 / NCIMB 9469 / D465).